Here is a 414-residue protein sequence, read N- to C-terminus: MAGMAPEGSQFDAKHYDSKMQELLHQGDNEEFFTSYDEVFESFDDMGLQENLLRGIYAYGFEKPSAIQQRGIVPFCKGLDVIQQAQSGTGKTATFCSGILQQLDYGLVECQSLVLAPTRELAQQIEKVMRALGDYLGVKVHACVGGTSVREDQRILASGVHVVVGTPGRVFDMLRRQSLRPDHIKMFVLDEADEMLSRGFKDQIYDIFQLLPPKIQVGVFSATMPPEALEITRKFMNKPVRILVKRDELTLEGIKQFYVNVEKEDWKLDTLCDLYETLAITQSVIFVNTRRKVDWLTDKMRSRDHTVSATHGDMDQNTRDIIMREFRSGSSRVLITTDLLARGIDVQQVSLVINYDLPTQPENYLHRIGRSGRFGRKGVAINFVTRDDERMLFDIQRFYNVTIEELPANVADLL.

The Q motif signature appears at 41-69; sequence ESFDDMGLQENLLRGIYAYGFEKPSAIQQ. The Helicase ATP-binding domain occupies 72–242; sequence IVPFCKGLDV…RKFMNKPVRI (171 aa). 85-92 serves as a coordination point for ATP; it reads AQSGTGKT. Positions 190–193 match the DEAD box motif; it reads DEAD. Positions 253-414 constitute a Helicase C-terminal domain; the sequence is GIKQFYVNVE…ELPANVADLL (162 aa).

The protein belongs to the DEAD box helicase family. eIF4A subfamily. As to quaternary structure, eIF4F is a multi-subunit complex, the composition of which varies with external and internal environmental conditions. It is composed of at least EIF4A, EIF4E and EIF4G. Interacts with DRM2 (via UBA domains).

The protein resides in the cytoplasm. It is found in the nucleus. The enzyme catalyses ATP + H2O = ADP + phosphate + H(+). Its function is as follows. ATP-dependent RNA helicase which is a subunit of the eIF4F complex involved in cap recognition and is required for mRNA binding to ribosome. In the current model of translation initiation, eIF4A unwinds RNA secondary structures in the 5'-UTR of mRNAs which is necessary to allow efficient binding of the small ribosomal subunit, and subsequent scanning for the initiator codon. This is Eukaryotic initiation factor 4A-3 from Oryza sativa subsp. japonica (Rice).